The primary structure comprises 1487 residues: Golgin subfamily A member 3 (1487 aa).

M1 carries the post-translational modification N-acetylmethionine. The disordered stretch occupies residues 1–118; sequence MDGASAKQDG…GTSAEGSVRK (118 aa). S18 and S60 each carry phosphoserine. Polar residues predominate over residues 62-74; it reads DRSSQVAICQNGQ. Positions 121 to 141 are interaction with GOPC; sequence LQSLRLSLPMQETQLCSTASS. The segment at 172–257 is golgi-targeting domain; sequence ERSSQPATKM…DYRTEDPSDS (86 aa). Disordered stretches follow at residues 221–321 and 365–394; these read PKVG…SSLS and AAQHQDQNQEANGEVRSRRDSICSSVSMES. 3 stretches are compositionally biased toward low complexity: residues 269 to 288, 312 to 321, and 365 to 375; these read SSLKQSRSSTSVVSEVSPSS, SDSSSHSSLS, and AAQHQDQNQEA. Position 270 is a phosphoserine (S270). Residues 358-1454 adopt a coiled-coil conformation; that stretch reads KDVLQAAAAQ…TITVHESLSS (1097 aa). S381, S385, and S461 each carry phosphoserine. The segment covering 785-796 has biased composition (basic and acidic residues); that stretch reads KEELDRGARRLE. The interval 785–804 is disordered; sequence KEELDRGARRLEEDTEETSG. The residue at position 979 (S979) is a Phosphoserine. The segment covering 1372 to 1382 has biased composition (basic and acidic residues); sequence RGAAKKKEPKG. Disordered regions lie at residues 1372 to 1396 and 1458 to 1487; these read RGAAKKKEPKGESNSSSPATPIKIP and VEAAPAEHAHPRGDTKLHNQNSVPRDGLGQ. Residue S1387 is modified to Phosphoserine. Over residues 1462–1474 the composition is skewed to basic and acidic residues; that stretch reads PAEHAHPRGDTKL. S1479 bears the Phosphoserine mark.

In terms of assembly, homodimer. Interacts with GOLGA7. Interacts with GOPC. In terms of processing, cleaved by caspases in apoptotic cells. As to expression, highly expressed in testis. Transcripts can be found in spermatids during spermatogenesis. No expression in Leydig cells, spermatogonia or spermatocytes. Detected at low levels in all tissues.

It localises to the cytoplasm. It is found in the golgi apparatus. The protein localises to the golgi stack membrane. In terms of biological role, plays an important role in spermatogenesis and/or testis development. Probably identical with the serologically detectable male antigen (SDM). Probably involved in maintaining Golgi structure. The chain is Golgin subfamily A member 3 (Golga3) from Mus musculus (Mouse).